A 389-amino-acid polypeptide reads, in one-letter code: ATP-dependent (S)-NAD(P)H-hydrate dehydratase (389 aa).

Residues 53 to 389 (TLQLVRNIIP…RGGGRLPQAL (337 aa)) form the YjeF C-terminal domain. Tyr85 carries the phosphotyrosine modification. (6S)-NADPHX-binding positions include Glu153 and 205-211 (NHMEFSR). ATP contacts are provided by residues 245-249 (KGERD) and 264-273 (GSSRRCGGQG). (6S)-NADPHX is bound at residue Asp274. Disordered stretches follow at residues 316–350 (KTRAQGGCGPRTTAPTSPHLPLSPSPQVQPSPGGC) and 369–389 (RSLHHHLRHDRRGGGRLPQAL).

The protein belongs to the NnrD/CARKD family. It depends on Mg(2+) as a cofactor.

It localises to the mitochondrion. It carries out the reaction (6S)-NADHX + ATP = ADP + phosphate + NADH + H(+). It catalyses the reaction (6S)-NADPHX + ATP = ADP + phosphate + NADPH + H(+). Functionally, catalyzes the dehydration of the S-form of NAD(P)HX at the expense of ATP, which is converted to ADP. Together with NAD(P)HX epimerase, which catalyzes the epimerization of the S- and R-forms, the enzyme allows the repair of both epimers of NAD(P)HX, a damaged form of NAD(P)H that is a result of enzymatic or heat-dependent hydration. This is ATP-dependent (S)-NAD(P)H-hydrate dehydratase from Macaca mulatta (Rhesus macaque).